The chain runs to 393 residues: Riboflavin biosynthesis protein RibBA (393 aa).

Positions 1 to 200 are DHBP synthase; that stretch reads MEFDEIKDAL…IESLVNYQKD (200 aa). D-ribulose 5-phosphate-binding positions include 27–28, Asp-32, 139–143, and Glu-163; these read RE and RTGHT. Mg(2+) is bound at residue Glu-28. His-142 is a binding site for Mg(2+). Residues 201–393 form a GTP cyclohydrolase II region; sequence KDTSVELKAK…TKKIKMGHLI (193 aa). 249–253 serves as a coordination point for GTP; it reads RIHSA. Zn(2+)-binding residues include Cys-254, Cys-265, and Cys-267. GTP is bound by residues Gln-270, 291-293, and Thr-313; that span reads EGR. Asp-325 functions as the Proton acceptor; for GTP cyclohydrolase activity in the catalytic mechanism. Catalysis depends on Arg-327, which acts as the Nucleophile; for GTP cyclohydrolase activity. GTP contacts are provided by Ser-348 and Lys-353.

In the N-terminal section; belongs to the DHBP synthase family. It in the C-terminal section; belongs to the GTP cyclohydrolase II family. It depends on Mg(2+) as a cofactor. The cofactor is Mn(2+). Zn(2+) serves as cofactor.

It carries out the reaction D-ribulose 5-phosphate = (2S)-2-hydroxy-3-oxobutyl phosphate + formate + H(+). The catalysed reaction is GTP + 4 H2O = 2,5-diamino-6-hydroxy-4-(5-phosphoribosylamino)-pyrimidine + formate + 2 phosphate + 3 H(+). It participates in cofactor biosynthesis; riboflavin biosynthesis; 2-hydroxy-3-oxobutyl phosphate from D-ribulose 5-phosphate: step 1/1. It functions in the pathway cofactor biosynthesis; riboflavin biosynthesis; 5-amino-6-(D-ribitylamino)uracil from GTP: step 1/4. Catalyzes the conversion of D-ribulose 5-phosphate to formate and 3,4-dihydroxy-2-butanone 4-phosphate. Functionally, catalyzes the conversion of GTP to 2,5-diamino-6-ribosylamino-4(3H)-pyrimidinone 5'-phosphate (DARP), formate and pyrophosphate. This chain is Riboflavin biosynthesis protein RibBA, found in Staphylococcus haemolyticus (strain JCSC1435).